Here is a 627-residue protein sequence, read N- to C-terminus: Zinc cluster transcription factor acuM (627 aa).

Disordered stretches follow at residues 1 to 40, 129 to 148, 155 to 193, 225 to 258, 277 to 305, and 394 to 416; these read MGCR…PARP, NGTA…GTME, AEGD…RRKV, CHDE…FSNA, PDGT…QNSL, and AQPS…PSST. Over residues 162–171 the composition is skewed to polar residues; sequence MESGSKNTAS. The zn(2)-C6 fungal-type DNA-binding region spans 197-225; the sequence is CVYCRRSHMTCDSERPCTRCIKRNIGHLC. Positions 225-251 are enriched in basic and acidic residues; that stretch reads CHDEPREPSKRARSEHEHSTAEEDGHS. Polar residues predominate over residues 286–305; the sequence is SSVSAVQHNTIPSSSAQNSL. Over residues 394–403 the composition is skewed to low complexity; it reads AQPSQPTQSQ. Over residues 404–416 the composition is skewed to polar residues; that stretch reads PHQNDSVQGPSST.

It is found in the nucleus. Transcription factor that governs genes involved in reductive and siderophore-mediated iron acquisition, and carbon metabolism. Suppresses the expression of sreA and induces hapX to stimulate expression of genes involved in both reductive iron assimilation and siderophore-mediated iron uptake which is essential for the maximal virulence. Also regulates genes involved in gluconeogenesis. The sequence is that of Zinc cluster transcription factor acuM from Aspergillus fumigatus (strain ATCC MYA-4609 / CBS 101355 / FGSC A1100 / Af293) (Neosartorya fumigata).